The sequence spans 160 residues: 3-hydroxyacyl-[acyl-carrier-protein] dehydratase FabZ (160 aa).

H59 is a catalytic residue.

Belongs to the thioester dehydratase family. FabZ subfamily.

The protein resides in the cytoplasm. The enzyme catalyses a (3R)-hydroxyacyl-[ACP] = a (2E)-enoyl-[ACP] + H2O. In terms of biological role, involved in unsaturated fatty acids biosynthesis. Catalyzes the dehydration of short chain beta-hydroxyacyl-ACPs and long chain saturated and unsaturated beta-hydroxyacyl-ACPs. The chain is 3-hydroxyacyl-[acyl-carrier-protein] dehydratase FabZ from Burkholderia thailandensis (strain ATCC 700388 / DSM 13276 / CCUG 48851 / CIP 106301 / E264).